The chain runs to 1829 residues: DNA polymerase (1829 aa).

DOD-type homing endonuclease domains lie at 527–668 and 1136–1269; these read LSGI…SLGI and FLGY…SLGV.

It belongs to the DNA polymerase type-B family. In terms of processing, this protein undergoes a protein self splicing that involves a post-translational excision of the three intervening regions (inteins) followed by peptide ligation.

It carries out the reaction DNA(n) + a 2'-deoxyribonucleoside 5'-triphosphate = DNA(n+1) + diphosphate. In Thermococcus aggregans, this protein is DNA polymerase (pol).